Here is a 305-residue protein sequence, read N- to C-terminus: Sulfate adenylyltransferase subunit 2 (305 aa).

A disordered region spans residues 283-305 (RQGRVIDHDQSASMEKKKQEGYF).

The protein belongs to the PAPS reductase family. CysD subfamily. In terms of assembly, heterodimer composed of CysD, the smaller subunit, and CysN.

The catalysed reaction is sulfate + ATP + H(+) = adenosine 5'-phosphosulfate + diphosphate. It functions in the pathway sulfur metabolism; hydrogen sulfide biosynthesis; sulfite from sulfate: step 1/3. In terms of biological role, with CysN forms the ATP sulfurylase (ATPS) that catalyzes the adenylation of sulfate producing adenosine 5'-phosphosulfate (APS) and diphosphate, the first enzymatic step in sulfur assimilation pathway. APS synthesis involves the formation of a high-energy phosphoric-sulfuric acid anhydride bond driven by GTP hydrolysis by CysN coupled to ATP hydrolysis by CysD. The chain is Sulfate adenylyltransferase subunit 2 from Caulobacter sp. (strain K31).